Reading from the N-terminus, the 481-residue chain is PTS system N-acetylmuramic acid-specific EIIBC component (481 aa).

Residues 1–89 (MAKITQTMMA…NALIESGDNV (89 aa)) form the PTS EIIB type-1 domain. Cys-28 (phosphocysteine intermediate; for EIIB activity) is an active-site residue. A PTS EIIC type-1 domain is found at 122–481 (SKFATIFTPL…FFGCKDVDLS (360 aa)). Helical transmembrane passes span 124 to 144 (FATIFTPLIPGFIAAGLLLGI), 165 to 185 (LVAYLKVFGKGLFAFLSILIG), 190 to 210 (QAFGGSGVNGAILASLFVLGY), 225 to 245 (FFGFAIDPRGNIIGVLLAAIL), 263 to 283 (MILTSVVTLLIMGAVTFLIIM), 307 to 327 (AAILAGLFLISVVFGIHQGFV), 342 to 362 (LFPILAMAGAGQVGASLALYA), 376 to 396 (GAIIPGILGIGEPLIYGVTLP), 406 to 426 (IGGAAGGFFIGLISYLGLPVG), and 448 to 468 (IFAGMAVFVGGLLISYTVGFA).

It is found in the cell inner membrane. The enzyme catalyses N-acetyl-beta-D-muramate(out) + N(pros)-phospho-L-histidyl-[protein] = N-acetyl-beta-D-muramate 6-phosphate(in) + L-histidyl-[protein]. Its function is as follows. The phosphoenolpyruvate-dependent sugar phosphotransferase system (sugar PTS), a major carbohydrate active transport system, catalyzes the phosphorylation of incoming sugar substrates concomitantly with their translocation across the cell membrane. This system is involved in N-acetylmuramic acid (MurNAc) transport, yielding cytoplasmic MurNAc-6-P. Is also able to take up anhydro-N-acetylmuramic acid (anhMurNAc), but cannot phosphorylate the carbon 6, probably because of the 1,6-anhydro ring. The sequence is that of PTS system N-acetylmuramic acid-specific EIIBC component (murP) from Vibrio cholerae serotype O1 (strain ATCC 39315 / El Tor Inaba N16961).